The chain runs to 314 residues: Homoserine O-succinyltransferase (314 aa).

Cys-142 serves as the catalytic Acyl-thioester intermediate. Lys-163 and Ser-192 together coordinate substrate. His-235 (proton acceptor) is an active-site residue. Glu-237 is a catalytic residue. Position 249 (Arg-249) interacts with substrate.

Belongs to the MetA family.

It is found in the cytoplasm. The catalysed reaction is L-homoserine + succinyl-CoA = O-succinyl-L-homoserine + CoA. Its pathway is amino-acid biosynthesis; L-methionine biosynthesis via de novo pathway; O-succinyl-L-homoserine from L-homoserine: step 1/1. Its function is as follows. Transfers a succinyl group from succinyl-CoA to L-homoserine, forming succinyl-L-homoserine. This is Homoserine O-succinyltransferase from Shewanella frigidimarina (strain NCIMB 400).